Here is an 80-residue protein sequence, read N- to C-terminus: Large ribosomal subunit protein uL24 (80 aa).

It belongs to the universal ribosomal protein uL24 family. Part of the 50S ribosomal subunit.

Functionally, one of two assembly initiator proteins, it binds directly to the 5'-end of the 23S rRNA, where it nucleates assembly of the 50S subunit. One of the proteins that surrounds the polypeptide exit tunnel on the outside of the subunit. The sequence is that of Large ribosomal subunit protein uL24 from Prosthecochloris aestuarii (strain DSM 271 / SK 413).